Consider the following 664-residue polypeptide: Bifunctional 3-dehydroquinate synthase/phosphatase (664 aa).

The 3-dehydroquinate synthase stretch occupies residues methionine 1–phenylalanine 352. NAD(+) contacts are provided by residues aspartate 61–lysine 66, glycine 95–aspartate 99, threonine 119–serine 120, lysine 132, lysine 141, and phenylalanine 159–threonine 162. Residues glutamate 174, histidine 238, and histidine 255 each contribute to the Zn(2+) site. The segment at leucine 353–lysine 664 is GPPA/PPX.

This sequence in the N-terminal section; belongs to the sugar phosphate cyclases superfamily. Dehydroquinate synthase family. In the C-terminal section; belongs to the GppA/Ppx family. In terms of assembly, monomer. NAD(+) serves as cofactor. Requires Co(2+) as cofactor. Zn(2+) is required as a cofactor.

The protein resides in the cytoplasm. It catalyses the reaction 7-phospho-2-dehydro-3-deoxy-D-arabino-heptonate = 3-dehydroquinate + phosphate. It functions in the pathway metabolic intermediate biosynthesis; chorismate biosynthesis; chorismate from D-erythrose 4-phosphate and phosphoenolpyruvate: step 2/7. The polypeptide is Bifunctional 3-dehydroquinate synthase/phosphatase (aroB) (Fusobacterium nucleatum subsp. nucleatum (strain ATCC 25586 / DSM 15643 / BCRC 10681 / CIP 101130 / JCM 8532 / KCTC 2640 / LMG 13131 / VPI 4355)).